The chain runs to 99 residues: Large ribosomal subunit protein uL23 (99 aa).

This sequence belongs to the universal ribosomal protein uL23 family. In terms of assembly, part of the 50S ribosomal subunit. Contacts protein L29, and trigger factor when it is bound to the ribosome.

Its function is as follows. One of the early assembly proteins it binds 23S rRNA. One of the proteins that surrounds the polypeptide exit tunnel on the outside of the ribosome. Forms the main docking site for trigger factor binding to the ribosome. This chain is Large ribosomal subunit protein uL23, found in Xanthomonas campestris pv. campestris (strain B100).